We begin with the raw amino-acid sequence, 291 residues long: Probable 2-(5''-triphosphoribosyl)-3'-dephosphocoenzyme-A synthase (291 aa).

It belongs to the CitG/MdcB family.

It carries out the reaction 3'-dephospho-CoA + ATP = 2'-(5''-triphospho-alpha-D-ribosyl)-3'-dephospho-CoA + adenine. Functionally, involved in the formation of 2-(5''-phosphoribosyl)-3'-dephosphocoenzyme-A, the prosthetic group of the acyl-carrier protein of the malonate decarboxylase. The polypeptide is Probable 2-(5''-triphosphoribosyl)-3'-dephosphocoenzyme-A synthase (Pseudomonas savastanoi pv. phaseolicola (strain 1448A / Race 6) (Pseudomonas syringae pv. phaseolicola (strain 1448A / Race 6))).